Reading from the N-terminus, the 369-residue chain is tRNA-specific 2-thiouridylase MnmA (369 aa).

Residues 11–18 (GMSGGVDS) and M37 each bind ATP. Positions 97-99 (NPD) are interaction with target base in tRNA. Residue C102 is the Nucleophile of the active site. A disulfide bridge links C102 with C199. G127 contacts ATP. An interaction with tRNA region spans residues 149-151 (KDQ). The active-site Cysteine persulfide intermediate is C199. The interaction with tRNA stretch occupies residues 311 to 312 (RY).

It belongs to the MnmA/TRMU family. As to quaternary structure, interacts with TusE.

It localises to the cytoplasm. It carries out the reaction S-sulfanyl-L-cysteinyl-[protein] + uridine(34) in tRNA + AH2 + ATP = 2-thiouridine(34) in tRNA + L-cysteinyl-[protein] + A + AMP + diphosphate + H(+). Functionally, catalyzes the 2-thiolation of uridine at the wobble position (U34) of tRNA(Lys), tRNA(Glu) and tRNA(Gln), leading to the formation of s(2)U34, the first step of tRNA-mnm(5)s(2)U34 synthesis. Sulfur is provided by IscS, via a sulfur-relay system. Binds ATP and its substrate tRNAs. The polypeptide is tRNA-specific 2-thiouridylase MnmA (Enterobacter sp. (strain 638)).